Reading from the N-terminus, the 243-residue chain is Ribosomal RNA small subunit methyltransferase G (243 aa).

S-adenosyl-L-methionine is bound by residues Gly79, Phe84, 130–131 (AE), and Arg150. The disordered stretch occupies residues 222-243 (KPTPNKYPRKPGIPNKQPLGGA).

It belongs to the methyltransferase superfamily. RNA methyltransferase RsmG family.

It is found in the cytoplasm. Specifically methylates the N7 position of a guanine in 16S rRNA. The chain is Ribosomal RNA small subunit methyltransferase G from Lacticaseibacillus paracasei (strain ATCC 334 / BCRC 17002 / CCUG 31169 / CIP 107868 / KCTC 3260 / NRRL B-441) (Lactobacillus paracasei).